Here is a 101-residue protein sequence, read N- to C-terminus: Small ribosomal subunit protein uS14 (101 aa).

Belongs to the universal ribosomal protein uS14 family. Part of the 30S ribosomal subunit. Contacts proteins S3 and S10.

Binds 16S rRNA, required for the assembly of 30S particles and may also be responsible for determining the conformation of the 16S rRNA at the A site. This Hydrogenovibrio crunogenus (strain DSM 25203 / XCL-2) (Thiomicrospira crunogena) protein is Small ribosomal subunit protein uS14.